Reading from the N-terminus, the 246-residue chain is UDP-N-acetyl-D-mannosaminuronic acid transferase (246 aa).

The protein belongs to the glycosyltransferase 26 family.

It carries out the reaction UDP-N-acetyl-alpha-D-mannosaminouronate + N-acetyl-alpha-D-glucosaminyl-di-trans,octa-cis-undecaprenyl diphosphate = beta-D-ManNAcA-(1-&gt;4)-alpha-D-GlcNAc-di-trans,octa-cis-undecaprenyl diphosphate + UDP + H(+). The protein operates within bacterial outer membrane biogenesis; enterobacterial common antigen biosynthesis. Functionally, catalyzes the synthesis of Und-PP-GlcNAc-ManNAcA (Lipid II), the second lipid-linked intermediate involved in enterobacterial common antigen (ECA) synthesis. This is UDP-N-acetyl-D-mannosaminuronic acid transferase from Serratia proteamaculans (strain 568).